We begin with the raw amino-acid sequence, 545 residues long: Chaperonin GroEL (545 aa).

Residues 29–32 (TLGP), K50, 86–90 (DGTTT), G415, and D495 each bind ATP.

The protein belongs to the chaperonin (HSP60) family. Forms a cylinder of 14 subunits composed of two heptameric rings stacked back-to-back. Interacts with the co-chaperonin GroES.

Its subcellular location is the cytoplasm. It catalyses the reaction ATP + H2O + a folded polypeptide = ADP + phosphate + an unfolded polypeptide.. In terms of biological role, together with its co-chaperonin GroES, plays an essential role in assisting protein folding. The GroEL-GroES system forms a nano-cage that allows encapsulation of the non-native substrate proteins and provides a physical environment optimized to promote and accelerate protein folding. This chain is Chaperonin GroEL, found in Porphyromonas gingivalis (strain ATCC 33277 / DSM 20709 / CIP 103683 / JCM 12257 / NCTC 11834 / 2561).